The primary structure comprises 303 residues: Mycothiol acetyltransferase (303 aa).

A 1D-myo-inositol 2-(L-cysteinylamino)-2-deoxy-alpha-D-glucopyranoside-binding site is contributed by D33. Residues 78–80 and 86–91 contribute to the acetyl-CoA site; these read VVV and RRGTGS. The 154-residue stretch at 150–303 folds into the N-acetyltransferase domain; it reads VRFATYSGPH…AYAAVAPTDV (154 aa). 1D-myo-inositol 2-(L-cysteinylamino)-2-deoxy-alpha-D-glucopyranoside-binding residues include E177, K218, and E226. Residue 230–232 coordinates acetyl-CoA; sequence VGV. 1D-myo-inositol 2-(L-cysteinylamino)-2-deoxy-alpha-D-glucopyranoside is bound at residue Y269. Acetyl-CoA is bound at residue 274-279; sequence NTAAVK.

Belongs to the acetyltransferase family. MshD subfamily. As to quaternary structure, monomer.

It catalyses the reaction 1D-myo-inositol 2-(L-cysteinylamino)-2-deoxy-alpha-D-glucopyranoside + acetyl-CoA = mycothiol + CoA + H(+). Its function is as follows. Catalyzes the transfer of acetyl from acetyl-CoA to desacetylmycothiol (Cys-GlcN-Ins) to form mycothiol. The sequence is that of Mycothiol acetyltransferase from Mycolicibacterium gilvum (strain PYR-GCK) (Mycobacterium gilvum (strain PYR-GCK)).